The sequence spans 371 residues: MSLENKNIIITAGGTGGHIYPALAIAELLRQNKANVTWVGTPNSMEASIVPEYFNIQFIKSSGVRRKGIIKKITFPLKLAYNTLKSRSLLKKLKADLVIGFGGYVSGPICLAAAQINIPVIIHEQNAKIGLTNRILAKFATTICLAFEIENLHKQFSSKQLAKTKIVGNPVRKDIVALNDKARIYTDSSTLKILVLGGSQGAKAINEIIPKLIQKSNEQGINIKVWHQTGKLSLEETKDAYKDISQNHIKDIAAFIDDMAIAYNWADLVICRAGALTVSECAIAGLPAIFIPLPSAVDDHQFFNAQNIVNNNAGFCLRQQQMTLENLLAIIKPLNQDRSKLEQMSKMAKKTLIKNSSEQILDCVKKILNNK.

UDP-N-acetyl-alpha-D-glucosamine-binding positions include 15–17 (TGG), Asn126, Arg172, Ser199, Ile256, 275–280 (ALTVSE), and Gln301.

The protein belongs to the glycosyltransferase 28 family. MurG subfamily.

The protein localises to the cell inner membrane. It carries out the reaction di-trans,octa-cis-undecaprenyl diphospho-N-acetyl-alpha-D-muramoyl-L-alanyl-D-glutamyl-meso-2,6-diaminopimeloyl-D-alanyl-D-alanine + UDP-N-acetyl-alpha-D-glucosamine = di-trans,octa-cis-undecaprenyl diphospho-[N-acetyl-alpha-D-glucosaminyl-(1-&gt;4)]-N-acetyl-alpha-D-muramoyl-L-alanyl-D-glutamyl-meso-2,6-diaminopimeloyl-D-alanyl-D-alanine + UDP + H(+). The protein operates within cell wall biogenesis; peptidoglycan biosynthesis. In terms of biological role, cell wall formation. Catalyzes the transfer of a GlcNAc subunit on undecaprenyl-pyrophosphoryl-MurNAc-pentapeptide (lipid intermediate I) to form undecaprenyl-pyrophosphoryl-MurNAc-(pentapeptide)GlcNAc (lipid intermediate II). This chain is UDP-N-acetylglucosamine--N-acetylmuramyl-(pentapeptide) pyrophosphoryl-undecaprenol N-acetylglucosamine transferase, found in Francisella tularensis subsp. tularensis (strain WY96-3418).